Reading from the N-terminus, the 312-residue chain is Probable rRNA-processing protein EBP2 (312 aa).

Residues 1 to 32 (MLHHEDESSPESDSDFDASELTDKELQEAFSQ) form a disordered region. Positions 8–20 (SSPESDSDFDASE) are enriched in acidic residues. Positions 140-176 (EMAKTDQHMQKIRHKLQLKQASMEKSEKAKQLRALRK) form a coiled coil. The segment at 211 to 312 (LDFLEGDQTP…VRQKMKSKRR (102 aa)) is disordered. Residues 282–312 (KGPHRPGKKGGKNANKRPGKNVRQKMKSKRR) show a composition bias toward basic residues.

This sequence belongs to the EBP2 family.

It localises to the nucleus. The protein resides in the nucleolus. In terms of biological role, required for the processing of the 27S pre-rRNA. The protein is Probable rRNA-processing protein EBP2 (ebna1bp2) of Xenopus laevis (African clawed frog).